Consider the following 299-residue polypeptide: Taste receptor type 2 member 4 (299 aa).

The Extracellular segment spans residues 1–9; it reads MLWLFYSSA. The chain crosses the membrane as a helical span at residues 10-30; that stretch reads IIASVILDFVGIIMSLFITVV. Residues 31–46 are Cytoplasmic-facing; it reads NYKTWVKSHRISSSER. The chain crosses the membrane as a helical span at residues 47–67; that stretch reads ILFSLGITRFFMLALFLVNTI. Residues 68 to 81 lie on the Extracellular side of the membrane; that stretch reads YFVSSNKERSVYLS. The chain crosses the membrane as a helical span at residues 82–102; that stretch reads AFFVLCFMFLDSSSLWFVTLL. Over 103-131 the chain is Cytoplasmic; sequence NSLYCVKITNFQHSVFLLLKRNISPKIPR. A helical transmembrane segment spans residues 132–152; it reads LLPACVLISAFTTCLYITLSQ. The Extracellular segment spans residues 153–172; that stretch reads ASPFPELVTKRNNTSFNISE. N-linked (GlcNAc...) asparagine glycans are attached at residues asparagine 164, asparagine 165, and asparagine 169. The helical transmembrane segment at 173–193 threads the bilayer; sequence GILSLVVSFVLSSSLQFIINV. The Cytoplasmic segment spans residues 194–230; it reads TSASLLIYSLRRHIRKMQKNATGFWNPQTEAHVGAMK. A helical transmembrane segment spans residues 231 to 251; it reads LMIYFLILYIPYSVATLVQYL. Topologically, residues 252–262 are extracellular; that stretch reads PFYAGMDMGTK. The helical transmembrane segment at 263-283 threads the bilayer; it reads SICLIFATLYSPGHSVLIIIT. The Cytoplasmic portion of the chain corresponds to 284–299; the sequence is HPKLKTTAKKILCFKK.

The protein belongs to the G-protein coupled receptor T2R family.

It is found in the membrane. The protein resides in the cell projection. The protein localises to the cilium membrane. In terms of biological role, gustducin-coupled receptor implicated in the perception of bitter compounds in the oral cavity and the gastrointestinal tract. Signals through PLCB2 and the calcium-regulated cation channel TRPM5. In airway epithelial cells, binding of denatonium increases the intracellular calcium ion concentration and stimulates ciliary beat frequency. The polypeptide is Taste receptor type 2 member 4 (TAS2R4) (Papio hamadryas (Hamadryas baboon)).